We begin with the raw amino-acid sequence, 336 residues long: Inactive serine/threonine-protein kinase PLK5 (336 aa).

The 65-residue stretch at 1 to 65 (MYTVLTGTPP…LDHLLQDDFF (65 aa)) folds into the Protein kinase; truncated domain. Disordered stretches follow at residues 109–135 (PCPFTPKEASGPGEGGPDPDSMEWDGE) and 224–245 (GRTGRHPHGPATPRREGTLPTP). In terms of domain architecture, POLO box spans 255–336 (LLRFLASEHA…HHALRMLQSI (82 aa)).

This sequence belongs to the protein kinase superfamily. Ser/Thr protein kinase family. CDC5/Polo subfamily. As to expression, expressed in the brain, neurons and glial cells. Also expressed in highly differentiated cells, such as the serous acini in the parotid gland, distal and proximal tubules of the kidney, tubules of the seminal gland, Kupffer cells and some hepatocytes in the liver, and some cells in the germinal center of lymph nodes (at protein level).

It localises to the nucleus. It is found in the nucleolus. Its subcellular location is the cytoplasm. Functionally, inactive serine/threonine-protein kinase that plays a role in cell cycle progression and neuronal differentiation. The polypeptide is Inactive serine/threonine-protein kinase PLK5 (PLK5) (Homo sapiens (Human)).